Here is an 812-residue protein sequence, read N- to C-terminus: Lon protease (812 aa).

In terms of domain architecture, Lon N-terminal spans 12–205; that stretch reads LPMLPLRGVL…YLCELLAKEM (194 aa). 357-364 provides a ligand contact to ATP; sequence GPPGVGKT. The 182-residue stretch at 593 to 774 folds into the Lon proteolytic domain; that stretch reads ENQVGVATGL…DEVLEETLLK (182 aa). Catalysis depends on residues Ser680 and Lys723.

This sequence belongs to the peptidase S16 family. Homohexamer. Organized in a ring with a central cavity.

The protein localises to the cytoplasm. The catalysed reaction is Hydrolysis of proteins in presence of ATP.. Functionally, ATP-dependent serine protease that mediates the selective degradation of mutant and abnormal proteins as well as certain short-lived regulatory proteins. Required for cellular homeostasis and for survival from DNA damage and developmental changes induced by stress. Degrades polypeptides processively to yield small peptide fragments that are 5 to 10 amino acids long. Binds to DNA in a double-stranded, site-specific manner. This Syntrophomonas wolfei subsp. wolfei (strain DSM 2245B / Goettingen) protein is Lon protease.